Here is a 174-residue protein sequence, read N- to C-terminus: Transcription antitermination protein NusB (174 aa).

This sequence belongs to the NusB family.

Its function is as follows. Involved in transcription antitermination. Required for transcription of ribosomal RNA (rRNA) genes. Binds specifically to the boxA antiterminator sequence of the ribosomal RNA (rrn) operons. This Rhodopseudomonas palustris (strain TIE-1) protein is Transcription antitermination protein NusB.